A 493-amino-acid chain; its full sequence is Cyclin-dependent kinase-like 2 (493 aa).

Residues 4-287 (YENLGLVGEG…CAELLHHDFF (284 aa)) enclose the Protein kinase domain. ATP is bound by residues 10–18 (VGEGSYGMV) and Lys33. A [NKR]KIAxRE motif is present at residues 45 to 51 (KKIAMRE). Asp126 serves as the catalytic Proton acceptor. A disordered region spans residues 363-384 (GEKAEKGNRASNASCLHDSRTS).

This sequence belongs to the protein kinase superfamily. CMGC Ser/Thr protein kinase family. CDC2/CDKX subfamily. Expressed in testis and kidney, and at lower level in brain and lung.

The protein localises to the cytoplasm. The protein resides in the nucleus. The catalysed reaction is L-seryl-[protein] + ATP = O-phospho-L-seryl-[protein] + ADP + H(+). The enzyme catalyses L-threonyl-[protein] + ATP = O-phospho-L-threonyl-[protein] + ADP + H(+). This is Cyclin-dependent kinase-like 2 from Homo sapiens (Human).